Here is a 275-residue protein sequence, read N- to C-terminus: Hydroxyethylthiazole kinase (275 aa).

Position 50 (M50) interacts with substrate. ATP-binding residues include R126 and S171. A200 contributes to the substrate binding site.

The protein belongs to the Thz kinase family. Requires Mg(2+) as cofactor.

It catalyses the reaction 5-(2-hydroxyethyl)-4-methylthiazole + ATP = 4-methyl-5-(2-phosphooxyethyl)-thiazole + ADP + H(+). It participates in cofactor biosynthesis; thiamine diphosphate biosynthesis; 4-methyl-5-(2-phosphoethyl)-thiazole from 5-(2-hydroxyethyl)-4-methylthiazole: step 1/1. Functionally, catalyzes the phosphorylation of the hydroxyl group of 4-methyl-5-beta-hydroxyethylthiazole (THZ). The chain is Hydroxyethylthiazole kinase from Acinetobacter baumannii (strain ACICU).